Consider the following 297-residue polypeptide: Bifunctional protein FolD 1 (297 aa).

NADP(+)-binding positions include 164–166 (GRS) and threonine 230.

The protein belongs to the tetrahydrofolate dehydrogenase/cyclohydrolase family. Homodimer.

The enzyme catalyses (6R)-5,10-methylene-5,6,7,8-tetrahydrofolate + NADP(+) = (6R)-5,10-methenyltetrahydrofolate + NADPH. The catalysed reaction is (6R)-5,10-methenyltetrahydrofolate + H2O = (6R)-10-formyltetrahydrofolate + H(+). Its pathway is one-carbon metabolism; tetrahydrofolate interconversion. Its function is as follows. Catalyzes the oxidation of 5,10-methylenetetrahydrofolate to 5,10-methenyltetrahydrofolate and then the hydrolysis of 5,10-methenyltetrahydrofolate to 10-formyltetrahydrofolate. The chain is Bifunctional protein FolD 1 from Rhodococcus jostii (strain RHA1).